Reading from the N-terminus, the 325-residue chain is Histone deacetylase 8 (325 aa).

The tract at residues 1–272 (MSRVVKPKVA…WTYLTALIVG (272 aa)) is histone deacetylase. D49 lines the substrate pocket. H91 serves as the catalytic Proton acceptor. Substrate is bound at residue G99. The a divalent metal cation site is built by D126, H128, and D215. Substrate is bound at residue Y254.

Belongs to the histone deacetylase family. HD type 1 subfamily. Requires a divalent metal cation as cofactor.

It is found in the nucleus. The protein resides in the chromosome. It localises to the cytoplasm. The catalysed reaction is N(6)-acetyl-L-lysyl-[histone] + H2O = L-lysyl-[histone] + acetate. The enzyme catalyses N(6)-acetyl-L-lysyl-[protein] + H2O = L-lysyl-[protein] + acetate. It catalyses the reaction N(6)-(2E)-butenoyl-L-lysyl-[protein] + H2O = (2E)-2-butenoate + L-lysyl-[protein]. Its activity is regulated as follows. Its activity is inhibited by trichostatin A (TSA) and butyrate, 2 well known histone deacetylase inhibitors. Functionally, histone deacetylase that catalyzes the deacetylation of lysine residues on the N-terminal part of the core histones (H2A, H2B, H3 and H4). Histone deacetylation gives a tag for epigenetic repression and plays an important role in transcriptional regulation, cell cycle progression and developmental events. Histone deacetylases act via the formation of large multiprotein complexes. Also involved in the deacetylation of non-histone proteins. In addition to protein deacetylase activity, also has protein-lysine deacylase activity: acts as a protein decrotonylase by mediating decrotonylation ((2E)-butenoyl) of histones. The sequence is that of Histone deacetylase 8 (hdac8) from Xenopus laevis (African clawed frog).